The following is a 193-amino-acid chain: Orotate phosphoribosyltransferase (193 aa).

5-phospho-alpha-D-ribose 1-diphosphate-binding positions include R102, K103, K106, H108, and 129-137 (EDVVTTGGS). Residues T133 and R161 each coordinate orotate.

This sequence belongs to the purine/pyrimidine phosphoribosyltransferase family. PyrE subfamily. As to quaternary structure, homodimer. It depends on Mg(2+) as a cofactor.

The enzyme catalyses orotidine 5'-phosphate + diphosphate = orotate + 5-phospho-alpha-D-ribose 1-diphosphate. It functions in the pathway pyrimidine metabolism; UMP biosynthesis via de novo pathway; UMP from orotate: step 1/2. Its function is as follows. Catalyzes the transfer of a ribosyl phosphate group from 5-phosphoribose 1-diphosphate to orotate, leading to the formation of orotidine monophosphate (OMP). This Prochlorococcus marinus (strain NATL1A) protein is Orotate phosphoribosyltransferase.